The sequence spans 417 residues: Imidazolonepropionase (417 aa).

Fe(3+) contacts are provided by His-77 and His-79. Residues His-77 and His-79 each contribute to the Zn(2+) site. 3 residues coordinate 4-imidazolone-5-propanoate: Arg-86, Tyr-149, and His-182. Tyr-149 is an N-formimidoyl-L-glutamate binding site. His-244 contacts Fe(3+). His-244 is a Zn(2+) binding site. Glu-247 serves as a coordination point for 4-imidazolone-5-propanoate. Asp-323 is a Fe(3+) binding site. Zn(2+) is bound at residue Asp-323. Asn-325 contributes to the N-formimidoyl-L-glutamate binding site.

The protein belongs to the metallo-dependent hydrolases superfamily. HutI family. It depends on Zn(2+) as a cofactor. Fe(3+) serves as cofactor.

The protein resides in the cytoplasm. The catalysed reaction is 4-imidazolone-5-propanoate + H2O = N-formimidoyl-L-glutamate. The protein operates within amino-acid degradation; L-histidine degradation into L-glutamate; N-formimidoyl-L-glutamate from L-histidine: step 3/3. Its function is as follows. Catalyzes the hydrolytic cleavage of the carbon-nitrogen bond in imidazolone-5-propanoate to yield N-formimidoyl-L-glutamate. It is the third step in the universal histidine degradation pathway. This chain is Imidazolonepropionase, found in Halobacterium salinarum (strain ATCC 29341 / DSM 671 / R1).